Reading from the N-terminus, the 228-residue chain is uncharacterized protein (228 aa).

Disordered regions lie at residues 1-62 (MQRP…VGRF) and 160-228 (SPRP…LSGV). The segment covering 13-33 (AASTRAPPRPSAPQQGRRQPS) has biased composition (low complexity). Residues 167–176 (RGQQVTQDGP) show a composition bias toward polar residues.

This is an uncharacterized protein from Homo sapiens (Human).